Consider the following 56-residue polypeptide: MNSKIEEMRITLIETAQKYGMNSKETIQCSQELDILLNTRIKEEMIFGRYLENSRM.

This sequence belongs to the spo0E family.

In terms of biological role, aspartyl-phosphate phosphatase which specifically dephosphorylates the sporulation transcription factor Spo0A-P and negatively regulates the sporulation initiation pathway in order to control the proper timing of sporulation. The sequence is that of Aspartyl-phosphate phosphatase YisI (yisI) from Bacillus subtilis (strain 168).